A 610-amino-acid polypeptide reads, in one-letter code: Elongation factor 4 (610 aa).

The tr-type G domain occupies 7–189 (SRIRNFSIIA…AIVQRIPPPK (183 aa)). GTP is bound by residues 19–24 (DHGKST) and 136–139 (NKID).

This sequence belongs to the TRAFAC class translation factor GTPase superfamily. Classic translation factor GTPase family. LepA subfamily.

It is found in the cell inner membrane. The catalysed reaction is GTP + H2O = GDP + phosphate + H(+). Required for accurate and efficient protein synthesis under certain stress conditions. May act as a fidelity factor of the translation reaction, by catalyzing a one-codon backward translocation of tRNAs on improperly translocated ribosomes. Back-translocation proceeds from a post-translocation (POST) complex to a pre-translocation (PRE) complex, thus giving elongation factor G a second chance to translocate the tRNAs correctly. Binds to ribosomes in a GTP-dependent manner. The protein is Elongation factor 4 of Thermus thermophilus (strain ATCC BAA-163 / DSM 7039 / HB27).